Reading from the N-terminus, the 276-residue chain is Glutamate 5-kinase (276 aa).

Residue Lys-14 coordinates ATP. Substrate contacts are provided by Ser-54, Asp-141, and Asn-157. ATP contacts are provided by residues 177 to 178 and 219 to 225; these read SD and TGGMLTK.

The protein belongs to the glutamate 5-kinase family.

The protein resides in the cytoplasm. It catalyses the reaction L-glutamate + ATP = L-glutamyl 5-phosphate + ADP. It participates in amino-acid biosynthesis; L-proline biosynthesis; L-glutamate 5-semialdehyde from L-glutamate: step 1/2. In terms of biological role, catalyzes the transfer of a phosphate group to glutamate to form L-glutamate 5-phosphate. This is Glutamate 5-kinase from Listeria innocua serovar 6a (strain ATCC BAA-680 / CLIP 11262).